The primary structure comprises 205 residues: Guanylate kinase (205 aa).

In terms of domain architecture, Guanylate kinase-like spans 7–185 (GNIFIISAAS…AEEDLRHIVN (179 aa)). Residue 14 to 21 (AASGTGKT) coordinates ATP.

The protein belongs to the guanylate kinase family.

Its subcellular location is the cytoplasm. The enzyme catalyses GMP + ATP = GDP + ADP. Essential for recycling GMP and indirectly, cGMP. In Neisseria meningitidis serogroup A / serotype 4A (strain DSM 15465 / Z2491), this protein is Guanylate kinase (gmk).